We begin with the raw amino-acid sequence, 61 residues long: Small ribosomal subunit protein uS14 (61 aa).

4 residues coordinate Zn(2+): C24, C27, C40, and C43.

This sequence belongs to the universal ribosomal protein uS14 family. Zinc-binding uS14 subfamily. As to quaternary structure, part of the 30S ribosomal subunit. Contacts proteins S3 and S10. Requires Zn(2+) as cofactor.

Binds 16S rRNA, required for the assembly of 30S particles and may also be responsible for determining the conformation of the 16S rRNA at the A site. The protein is Small ribosomal subunit protein uS14 of Clostridium botulinum (strain 657 / Type Ba4).